Consider the following 114-residue polypeptide: Dolichyl-diphosphooligosaccharide--protein glycosyltransferase subunit DAD1 (114 aa).

Over 1 to 30 (MPRATSDAKLLIQSLGKAYAATPTNLKIID) the chain is Cytoplasmic. A helical membrane pass occupies residues 31-51 (LYVVFAVATALIQVVYMGIVG). At 52 to 54 (SFP) the chain is on the lumenal side. The chain crosses the membrane as a helical span at residues 55–75 (FNSFLSGVLSCIGTAVLAVCL). The Cytoplasmic portion of the chain corresponds to 76-93 (RIQVNKDNKEFKDLPPER). A helical transmembrane segment spans residues 94–114 (AFADFVLCNLVLHLVIMNFLG).

It belongs to the DAD/OST2 family. Component of the oligosaccharyltransferase (OST) complex.

The protein localises to the endoplasmic reticulum membrane. The protein operates within protein modification; protein glycosylation. Subunit of the oligosaccharyl transferase (OST) complex that catalyzes the initial transfer of a defined glycan (Glc(3)Man(9)GlcNAc(2) in eukaryotes) from the lipid carrier dolichol-pyrophosphate to an asparagine residue within an Asn-X-Ser/Thr consensus motif in nascent polypeptide chains, the first step in protein N-glycosylation. N-glycosylation occurs cotranslationally and the complex associates with the Sec61 complex at the channel-forming translocon complex that mediates protein translocation across the endoplasmic reticulum (ER). All subunits are required for a maximal enzyme activity. The polypeptide is Dolichyl-diphosphooligosaccharide--protein glycosyltransferase subunit DAD1 (DAD1) (Oryza sativa subsp. indica (Rice)).